Here is a 287-residue protein sequence, read N- to C-terminus: Bifunctional protein FolD 1 (287 aa).

Residues 170–172 (GRS) and serine 195 contribute to the NADP(+) site.

This sequence belongs to the tetrahydrofolate dehydrogenase/cyclohydrolase family. As to quaternary structure, homodimer.

It carries out the reaction (6R)-5,10-methylene-5,6,7,8-tetrahydrofolate + NADP(+) = (6R)-5,10-methenyltetrahydrofolate + NADPH. The enzyme catalyses (6R)-5,10-methenyltetrahydrofolate + H2O = (6R)-10-formyltetrahydrofolate + H(+). It participates in one-carbon metabolism; tetrahydrofolate interconversion. Functionally, catalyzes the oxidation of 5,10-methylenetetrahydrofolate to 5,10-methenyltetrahydrofolate and then the hydrolysis of 5,10-methenyltetrahydrofolate to 10-formyltetrahydrofolate. This chain is Bifunctional protein FolD 1, found in Streptomyces avermitilis (strain ATCC 31267 / DSM 46492 / JCM 5070 / NBRC 14893 / NCIMB 12804 / NRRL 8165 / MA-4680).